A 425-amino-acid chain; its full sequence is Gamma-glutamyl phosphate reductase (425 aa).

It belongs to the gamma-glutamyl phosphate reductase family.

The protein resides in the cytoplasm. It catalyses the reaction L-glutamate 5-semialdehyde + phosphate + NADP(+) = L-glutamyl 5-phosphate + NADPH + H(+). Its pathway is amino-acid biosynthesis; L-proline biosynthesis; L-glutamate 5-semialdehyde from L-glutamate: step 2/2. In terms of biological role, catalyzes the NADPH-dependent reduction of L-glutamate 5-phosphate into L-glutamate 5-semialdehyde and phosphate. The product spontaneously undergoes cyclization to form 1-pyrroline-5-carboxylate. In Novosphingobium aromaticivorans (strain ATCC 700278 / DSM 12444 / CCUG 56034 / CIP 105152 / NBRC 16084 / F199), this protein is Gamma-glutamyl phosphate reductase.